Reading from the N-terminus, the 37-residue chain is MKIRASVRQICDKCRLIRRRGRIRVICYNPRHKQRQG.

It belongs to the bacterial ribosomal protein bL36 family.

It localises to the plastid. The chain is Large ribosomal subunit protein bL36c from Cuscuta reflexa (Southern Asian dodder).